The chain runs to 1427 residues: Protein expanded (1427 aa).

Residues 26 to 399 (RFLALRLLGQ…DTHQWSMKLA (374 aa)) form the FERM domain. Residues 176–212 (GDAPPGTSNSKDDSGEETSASPSNGGRGLSATTTLPK) form a disordered region. Positions 192–211 (ETSASPSNGGRGLSATTTLP) are enriched in polar residues. Phosphotyrosine occurs at positions 227 and 423. 2 disordered regions span residues 520–566 (VRPQ…IGSQ) and 611–656 (NSAL…SGVY). Over residues 524–544 (DASSNGATIVTNSSVQRNSMG) the composition is skewed to polar residues. The span at 545–559 (TTANDSSTATDSPSS) shows a compositional bias: low complexity. Tyrosine 679 is subject to Phosphotyrosine. Residues 688–710 (EETHVQHSDSVDGKKKEDFRPRS) show a composition bias toward basic and acidic residues. Disordered stretches follow at residues 688 to 732 (EETH…DNKH), 766 to 792 (YVTL…YSAR), 815 to 880 (APKP…SLKS), 939 to 963 (HNSN…HRHS), and 1000 to 1022 (LAPP…HPHL). Position 766 is a phosphotyrosine (tyrosine 766). The span at 818 to 838 (PDSPPCSPPVPPAPIPAPPPA) shows a compositional bias: pro residues. The RXPPXY motif motif lies at 842–847 (RDPPPY). The span at 848 to 859 (SISSKPRPTSLI) shows a compositional bias: polar residues. The segment covering 860-877 (SVSSSAHPAPSAAGSMSS) has biased composition (low complexity). The span at 951-963 (LHHHHVPSHHRHS) shows a compositional bias: basic residues. The segment covering 1001-1019 (APPPPSLPRQPPPPPPPNH) has biased composition (pro residues). An SH3-binding motif is present at residues 1008 to 1020 (PRQPPPPPPPNHP). Phosphotyrosine is present on tyrosine 1103. Positions 1149 to 1157 (PPPPPPLHP) match the SH3-binding motif. Serine 1181 bears the Phosphoserine mark. Disordered regions lie at residues 1190–1267 (DLLP…WAGE) and 1345–1398 (TGQE…LPVQ). 2 stretches are compositionally biased toward pro residues: residues 1214–1230 (PPMP…PSKP) and 1237–1246 (PIPPRKPPTL). Composition is skewed to polar residues over residues 1253-1262 (SPLTKTSSGA) and 1345-1370 (TGQE…SSAG). The segment covering 1376-1388 (KARKGSTVSHRHP) has biased composition (basic residues).

In terms of assembly, forms a complex with Kibra and Mer. Interacts (via RXPPXY motif) with Kibra (via domain WW 1). Interacts with Mer and Hpo (via SARAH domain). Interacts with Schip1; the interaction results in recruitment of Schip1 to the apical cell membrane. Interacts with ack and yki. Phosphorylated by Ack at several tyrosines including Tyr-227, Tyr-423, Tyr-679, Tyr-766 and Tyr-1103.

It localises to the apical cell membrane. Functionally, activates the Hippo/SWH (Sav/Wts/Hpo) signaling pathway, a signaling pathway that plays a pivotal role in organ size control and tumor suppression by restricting proliferation and promoting apoptosis. The core of this pathway is composed of a kinase cascade wherein Hippo (Hpo), in complex with its regulatory protein Salvador (Sav), phosphorylates and activates Warts (Wts) in complex with its regulatory protein Mats, which in turn phosphorylates and inactivates the Yorkie (Yki) oncoprotein. Ex acts synergistically along with Mer and Kibra to regulate the Hippo signaling pathway. Involved in the control of cell proliferation in imaginal disks. May bind to certain proteins of signal transduction pathways by interaction with their SH3 domains. Required for apical localization of Schip1. This Drosophila melanogaster (Fruit fly) protein is Protein expanded (ex).